We begin with the raw amino-acid sequence, 259 residues long: uncharacterized protein (259 aa).

It belongs to the methyltransferase superfamily.

This is an uncharacterized protein from Mycobacteroides abscessus (strain ATCC 19977 / DSM 44196 / CCUG 20993 / CIP 104536 / JCM 13569 / NCTC 13031 / TMC 1543 / L948) (Mycobacterium abscessus).